Consider the following 246-residue polypeptide: MAEEGERKKIPLVPENLLKKRKAYQALKATQAKQALLAKRERKGKQFRFRRLESFVHDSWRQQRDKVRVQRLEVKPRALEVPDKHPLAFVIRMERIEGVSLLVKSTIMKLGLKKLFSGVFVKVTPQSVRMLRTVEPYVTWGFPNLKSVRELILKRGQAKINNKTVPLTDNTVIEEHLGRFGVICLEDLIHEIAFPGKHFQEVSSFLCPFLLSVARHATRNRVGFRKEMGSPGYRGDRINQLIRQLN.

Serine 54 carries the post-translational modification Phosphoserine.

Belongs to the universal ribosomal protein uL30 family.

This Mus musculus (Mouse) protein is Large ribosomal subunit protein uL30-like 1 (Rpl7l1).